The following is a 56-amino-acid chain: MSKFDDFDLDVVKVSKQDSKITPQWKSESLCTPGCVTGALQTCFLQTLTCNCKISK.

Positions M1 to Q24 are excised as a propeptide. W25 carries the N2-succinyltryptophan; partial modification. Residues S27 to C31 constitute a cross-link (lanthionine (Ser-Cys)). 2,3-didehydroalanine (Ser) is present on S29. 4 consecutive cross-links (beta-methyllanthionine (Thr-Cys)) follow at residues T32–C35, T37–C43, T47–C50, and T49–C52. T42 bears the (Z)-2,3-didehydrobutyrine mark. Residue S55 is modified to 2,3-didehydroalanine (Ser).

It belongs to the type A lantibiotic family. Maturation of lantibiotics involves the enzymatic conversion of Thr, and Ser into dehydrated AA and the formation of thioether bonds with cysteine. This is followed by membrane translocation and cleavage of the modified precursor. In terms of processing, succinylated subtilin is 10-20 times less active than subtilin. The ratio subtilin/succinylated subtilin is about 1:2 after 24 hours growth. Post-translationally, the 2,3-didehydrobutyrine is determined to be the Z-isomer.

Lanthionine-containing peptide antibiotic (lantibiotic) active on Gram-positive bacteria. The bactericidal activity of lantibiotics is based on depolarization of energized bacterial cytoplasmic membranes, initiated by the formation of aqueous transmembrane pores. The protein is Lantibiotic subtilin (spaS) of Bacillus subtilis.